The following is a 305-amino-acid chain: HPr kinase/phosphorylase (305 aa).

Catalysis depends on residues His-138 and Lys-159. 153–160 serves as a coordination point for ATP; it reads GESGIGKS. Ser-160 is a Mg(2+) binding site. Catalysis depends on Asp-177, which acts as the Proton acceptor; for phosphorylation activity. Proton donor; for dephosphorylation activity. The important for the catalytic mechanism of both phosphorylation and dephosphorylation stretch occupies residues 201–210; the sequence is IEIRGIGILD. Residue Glu-202 participates in Mg(2+) binding. Residue Arg-243 is part of the active site. The segment at 264–269 is important for the catalytic mechanism of dephosphorylation; sequence PVRPGR.

Belongs to the HPrK/P family. Homohexamer. Mg(2+) serves as cofactor.

The enzyme catalyses [HPr protein]-L-serine + ATP = [HPr protein]-O-phospho-L-serine + ADP + H(+). It carries out the reaction [HPr protein]-O-phospho-L-serine + phosphate + H(+) = [HPr protein]-L-serine + diphosphate. Catalyzes the ATP- as well as the pyrophosphate-dependent phosphorylation of a specific serine residue in HPr, a phosphocarrier protein of the phosphoenolpyruvate-dependent sugar phosphotransferase system (PTS). HprK/P also catalyzes the pyrophosphate-producing, inorganic phosphate-dependent dephosphorylation (phosphorolysis) of seryl-phosphorylated HPr (P-Ser-HPr). The two antagonistic activities of HprK/P are regulated by several intracellular metabolites, which change their concentration in response to the absence or presence of rapidly metabolisable carbon sources (glucose, fructose, etc.) in the growth medium. Therefore, by controlling the phosphorylation state of HPr, HPrK/P is a sensor enzyme that plays a major role in the regulation of carbon metabolism and sugar transport: it mediates carbon catabolite repression (CCR), and regulates PTS-catalyzed carbohydrate uptake and inducer exclusion. The protein is HPr kinase/phosphorylase of Thermoanaerobacter pseudethanolicus (strain ATCC 33223 / 39E) (Clostridium thermohydrosulfuricum).